Consider the following 451-residue polypeptide: Probable D-serine dehydratase (451 aa).

At lysine 119 the chain carries N6-(pyridoxal phosphate)lysine.

This sequence belongs to the serine/threonine dehydratase family. DsdA subfamily. It depends on pyridoxal 5'-phosphate as a cofactor.

The enzyme catalyses D-serine = pyruvate + NH4(+). The chain is Probable D-serine dehydratase from Acidovorax sp. (strain JS42).